A 135-amino-acid chain; its full sequence is Transcriptional regulator HosA (135 aa).

The HTH marR-type domain maps to 4 to 134 (RNKAFHQLRQ…FMQLVRKMMN (131 aa)). The segment at residues 48-71 (QVALIEAAVSTKATLAEMLARMEN) is a DNA-binding region (H-T-H motif).

In terms of biological role, involved in the temperature-dependent positive control of flagellum-driven swimming motility and cellular aggregation. Regulates fliC expression by directly interacting with fliC promoter. The sequence is that of Transcriptional regulator HosA (hosA) from Escherichia coli O127:H6 (strain E2348/69 / EPEC).